The chain runs to 321 residues: Geranylgeranyl transferase type-2 subunit beta 1 (321 aa).

S2 bears the N-acetylserine mark. PFTB repeat units lie at residues 14–55 (ADKH…DLLD), 62–103 (EEEV…ALFD), 110–151 (IGKV…SILK), 158–199 (VEKA…AITG), 206–247 (KDSL…IMID), and 254–296 (KAKL…SLLE). Geranylgeranyl diphosphate contacts are provided by residues 184-186 (HAG) and 226-229 (RPEK). 2 residues coordinate Zn(2+): D232 and C234. 235-238 (YSWW) contributes to the geranylgeranyl diphosphate binding site. H284 serves as a coordination point for Zn(2+).

The protein belongs to the protein prenyltransferase subunit beta family. In terms of assembly, heterotrimer composed of the alpha subunit RGTA, the beta subunit RGTB and REP; within this trimer, RGTA and RGTB form the catalytic component, while REP mediates peptide substrate binding. It depends on Zn(2+) as a cofactor. Mg(2+) is required as a cofactor.

The enzyme catalyses geranylgeranyl diphosphate + L-cysteinyl-[protein] = S-geranylgeranyl-L-cysteinyl-[protein] + diphosphate. With respect to regulation, the enzymatic reaction requires the aid of the Rab escort protein REP. Catalyzes the transfer of a geranylgeranyl moiety from geranylgeranyl diphosphate to both cysteines of Rab proteins with the C-terminal sequence -CCXX, CXXX, -XCCX and -XCXC, such as RABA1A, RABA2A, RABF2A and RABG2. Involved in the geranylgeranylation of RABA2A. In vitro, can prenylate PGGTI targets with the C-terminal sequence Cys-aliphatic-aliphatic-X (CaaX) with leucine in the terminal position. Substrates with the C-terminal sequence -CSIL such as ARAC11/ROP1 or GG2/AGG2 are prenylated independently of REP and when the beta subunit is associated with the alpha subunit RGTA1. Its function is as follows. Required for male fertility and root tip growth. The chain is Geranylgeranyl transferase type-2 subunit beta 1 from Arabidopsis thaliana (Mouse-ear cress).